The sequence spans 330 residues: AH receptor-interacting protein (330 aa).

The region spanning 31-121 (GTKATFHFRT…KDPLEGQRHC (91 aa)) is the PPIase FKBP-type domain. Serine 43 is modified (phosphoserine). TPR repeat units follow at residues 179 to 212 (VPVI…LKNL), 231 to 264 (TPLL…YDDN), and 265 to 298 (VKAY…DPAL).

As to quaternary structure, interacts with RET in the pituitary gland; this interaction prevents the formation of the AIP-survivin complex.

The protein resides in the cytoplasm. Its function is as follows. May play a positive role in AHR-mediated (aromatic hydrocarbon receptor) signaling, possibly by influencing its receptivity for ligand and/or its nuclear targeting. In Mus musculus (Mouse), this protein is AH receptor-interacting protein (Aip).